Consider the following 134-residue polypeptide: Complexin-1 (134 aa).

2 disordered regions span residues Met-1–Glu-60 and Lys-74–Glu-114. The span at Asp-15–Glu-60 shows a compositional bias: basic and acidic residues. The stretch at Asp-29 to Gln-64 forms a coiled coil. The interaction with the SNARE complex stretch occupies residues Arg-48–Tyr-70.

Belongs to the complexin/synaphin family. As to quaternary structure, binds to the SNARE core complex containing SNAP25, VAMP2 and STX1A. Nervous system, and pancreatic islet cells. Present in many brain regions, including hippocampus and cerebellum. In the retina, present at conventional amacrine cell synapses (at protein level).

Its subcellular location is the cytoplasm. It is found in the cytosol. It localises to the perikaryon. The protein resides in the presynapse. Its function is as follows. Positively regulates a late step in exocytosis of various cytoplasmic vesicles, such as synaptic vesicles and other secretory vesicles. Organizes the SNAREs into a cross-linked zigzag topology that, when interposed between the vesicle and plasma membranes, is incompatible with fusion, thereby preventing SNAREs from releasing neurotransmitters until an action potential arrives at the synapse. Also involved in glucose-induced secretion of insulin by pancreatic beta-cells. Essential for motor behavior. This is Complexin-1 (Cplx1) from Mus musculus (Mouse).